The chain runs to 413 residues: 1-deoxy-D-xylulose 5-phosphate reductoisomerase (413 aa).

7 residues coordinate NADPH: threonine 13, glycine 14, serine 15, isoleucine 16, lysine 40, asparagine 41, and asparagine 127. Lysine 128 contributes to the 1-deoxy-D-xylulose 5-phosphate binding site. An NADPH-binding site is contributed by glutamate 129. Mn(2+) is bound at residue aspartate 153. 1-deoxy-D-xylulose 5-phosphate contacts are provided by serine 154, glutamate 155, serine 184, and histidine 207. Glutamate 155 contacts Mn(2+). Position 213 (glycine 213) interacts with NADPH. 1-deoxy-D-xylulose 5-phosphate contacts are provided by serine 220, asparagine 225, lysine 226, and glutamate 229. Glutamate 229 is a binding site for Mn(2+).

The protein belongs to the DXR family. It depends on Mg(2+) as a cofactor. Requires Mn(2+) as cofactor.

The catalysed reaction is 2-C-methyl-D-erythritol 4-phosphate + NADP(+) = 1-deoxy-D-xylulose 5-phosphate + NADPH + H(+). It participates in isoprenoid biosynthesis; isopentenyl diphosphate biosynthesis via DXP pathway; isopentenyl diphosphate from 1-deoxy-D-xylulose 5-phosphate: step 1/6. Catalyzes the NADPH-dependent rearrangement and reduction of 1-deoxy-D-xylulose-5-phosphate (DXP) to 2-C-methyl-D-erythritol 4-phosphate (MEP). The sequence is that of 1-deoxy-D-xylulose 5-phosphate reductoisomerase from Nitrosomonas eutropha (strain DSM 101675 / C91 / Nm57).